The chain runs to 222 residues: Ribosomal RNA small subunit methyltransferase I (222 aa).

It belongs to the methyltransferase superfamily. RsmI family.

It localises to the cytoplasm. It catalyses the reaction cytidine(1402) in 16S rRNA + S-adenosyl-L-methionine = 2'-O-methylcytidine(1402) in 16S rRNA + S-adenosyl-L-homocysteine + H(+). Functionally, catalyzes the 2'-O-methylation of the ribose of cytidine 1402 (C1402) in 16S rRNA. The sequence is that of Ribosomal RNA small subunit methyltransferase I from Thermotoga maritima (strain ATCC 43589 / DSM 3109 / JCM 10099 / NBRC 100826 / MSB8).